The following is a 527-amino-acid chain: AAA ATPase forming ring-shaped complexes (527 aa).

Residues methionine 1–aspartate 18 show a composition bias toward low complexity. The segment at methionine 1–asparagine 38 is disordered. Over residues phenylalanine 19–glutamine 33 the composition is skewed to basic and acidic residues. Positions arginine 21 to lysine 53 form a coiled coil. Residue glycine 257–leucine 262 participates in ATP binding. Residues aspartate 492–arginine 515 form a disordered region. The segment covering serine 497–aspartate 507 has biased composition (polar residues).

Belongs to the AAA ATPase family. Homohexamer. Assembles into a hexameric ring structure.

This chain is AAA ATPase forming ring-shaped complexes, found in Corynebacterium glutamicum (strain R).